A 204-amino-acid polypeptide reads, in one-letter code: Peptidyl-tRNA hydrolase (204 aa).

Tyrosine 19 lines the tRNA pocket. Residue histidine 24 is the Proton acceptor of the active site. Positions 70, 72, and 118 each coordinate tRNA.

This sequence belongs to the PTH family. As to quaternary structure, monomer.

It localises to the cytoplasm. The catalysed reaction is an N-acyl-L-alpha-aminoacyl-tRNA + H2O = an N-acyl-L-amino acid + a tRNA + H(+). Functionally, hydrolyzes ribosome-free peptidyl-tRNAs (with 1 or more amino acids incorporated), which drop off the ribosome during protein synthesis, or as a result of ribosome stalling. In terms of biological role, catalyzes the release of premature peptidyl moieties from peptidyl-tRNA molecules trapped in stalled 50S ribosomal subunits, and thus maintains levels of free tRNAs and 50S ribosomes. The chain is Peptidyl-tRNA hydrolase from Prochlorococcus marinus (strain SARG / CCMP1375 / SS120).